The chain runs to 231 residues: Urease accessory protein UreE (231 aa).

The interval 185 to 231 (VASPLDEPHGSGLHIHGIHSHGEGHSHGDHDHDHSHSHGDHDHDHKH) is disordered. A compositionally biased stretch (basic and acidic residues) spans 204–231 (SHGEGHSHGDHDHDHSHSHGDHDHDHKH).

This sequence belongs to the UreE family.

Its subcellular location is the cytoplasm. Its function is as follows. Involved in urease metallocenter assembly. Binds nickel. Probably functions as a nickel donor during metallocenter assembly. This is Urease accessory protein UreE from Yersinia pseudotuberculosis serotype O:1b (strain IP 31758).